A 235-amino-acid chain; its full sequence is DNA repair protein RecO (235 aa).

This sequence belongs to the RecO family.

Its function is as follows. Involved in DNA repair and RecF pathway recombination. The polypeptide is DNA repair protein RecO (Enterobacter sp. (strain 638)).